The chain runs to 334 residues: Holliday junction branch migration complex subunit RuvB (334 aa).

A large ATPase domain (RuvB-L) region spans residues 1 to 182 (MNERMVDQSM…FGVHLRLEYY (182 aa)). Residues L21, R22, G63, K66, T67, T68, 129–131 (EDF), R172, Y182, and R219 each bind ATP. T67 lines the Mg(2+) pocket. The interval 183-253 (NESDLKEIII…TTKHALGLLQ (71 aa)) is small ATPAse domain (RuvB-S). The tract at residues 256 to 334 (QHGLDYIDHK…HFAKSNEERE (79 aa)) is head domain (RuvB-H). Positions 292, 311, and 316 each coordinate DNA.

Belongs to the RuvB family. In terms of assembly, homohexamer. Forms an RuvA(8)-RuvB(12)-Holliday junction (HJ) complex. HJ DNA is sandwiched between 2 RuvA tetramers; dsDNA enters through RuvA and exits via RuvB. An RuvB hexamer assembles on each DNA strand where it exits the tetramer. Each RuvB hexamer is contacted by two RuvA subunits (via domain III) on 2 adjacent RuvB subunits; this complex drives branch migration. In the full resolvosome a probable DNA-RuvA(4)-RuvB(12)-RuvC(2) complex forms which resolves the HJ.

The protein resides in the cytoplasm. The enzyme catalyses ATP + H2O = ADP + phosphate + H(+). Functionally, the RuvA-RuvB-RuvC complex processes Holliday junction (HJ) DNA during genetic recombination and DNA repair, while the RuvA-RuvB complex plays an important role in the rescue of blocked DNA replication forks via replication fork reversal (RFR). RuvA specifically binds to HJ cruciform DNA, conferring on it an open structure. The RuvB hexamer acts as an ATP-dependent pump, pulling dsDNA into and through the RuvAB complex. RuvB forms 2 homohexamers on either side of HJ DNA bound by 1 or 2 RuvA tetramers; 4 subunits per hexamer contact DNA at a time. Coordinated motions by a converter formed by DNA-disengaged RuvB subunits stimulates ATP hydrolysis and nucleotide exchange. Immobilization of the converter enables RuvB to convert the ATP-contained energy into a lever motion, pulling 2 nucleotides of DNA out of the RuvA tetramer per ATP hydrolyzed, thus driving DNA branch migration. The RuvB motors rotate together with the DNA substrate, which together with the progressing nucleotide cycle form the mechanistic basis for DNA recombination by continuous HJ branch migration. Branch migration allows RuvC to scan DNA until it finds its consensus sequence, where it cleaves and resolves cruciform DNA. The protein is Holliday junction branch migration complex subunit RuvB of Staphylococcus aureus (strain MRSA252).